A 399-amino-acid chain; its full sequence is Alpha-tubulin N-acetyltransferase (399 aa).

Positions 1 to 178 constitute an N-acetyltransferase domain; it reads MEFNFIINKL…NNFVVFDQYF (178 aa). Residues 112–125 and 148–157 contribute to the acetyl-CoA site; these read FYVHESCQRQGYGK and SPKLIAFLKK. The segment covering 183–193 has biased composition (polar residues); the sequence is SSQNKQNQNTR. The tract at residues 183–223 is disordered; the sequence is SSQNKQNQNTRSYSQPYSDYSSQIPTNYPQQQQQQSNSKSY. The segment covering 194 to 223 has biased composition (low complexity); it reads SYSQPYSDYSSQIPTNYPQQQQQQSNSKSY.

It belongs to the acetyltransferase ATAT1 family.

The catalysed reaction is L-lysyl-[alpha-tubulin] + acetyl-CoA = N(6)-acetyl-L-lysyl-[alpha-tubulin] + CoA + H(+). Functionally, specifically acetylates 'Lys-40' in alpha-tubulin on the lumenal side of microtubules. Promotes microtubule destabilization and accelerates microtubule dynamics; this activity may be independent of acetylation activity. Acetylates alpha-tubulin with a slow enzymatic rate, due to a catalytic site that is not optimized for acetyl transfer. Enters the microtubule through each end and diffuses quickly throughout the lumen of microtubules. Acetylates only long/old microtubules because of its slow acetylation rate since it does not have time to act on dynamically unstable microtubules before the enzyme is released. The protein is Alpha-tubulin N-acetyltransferase of Tetrahymena thermophila (strain SB210).